A 792-amino-acid polypeptide reads, in one-letter code: Ubiquitin carboxyl-terminal hydrolase 10 (792 aa).

Ala2 carries the N-acetylalanine modification. The interaction with p53/TP53 stretch occupies residues 2–99 (ALHNPQYIFG…ILGCTTSKKI (98 aa)). The segment at 6–21 (PQYIFGDFSPDEFNQF) is G3BP1-binding. Thr24 carries the post-translational modification Phosphothreonine. The interval 126 to 164 (SNAEAETLENDSGAGGLGQRERKKKKKRPPGYYSYLKDG) is disordered. 2 positions are modified to phosphoserine: Ser208 and Ser223. A compositionally biased stretch (basic and acidic residues) spans 300–309 (DEGADLDPAK). Positions 300 to 323 (DEGADLDPAKPESQSPPAESALSA) are disordered. At Ser314 the chain carries Phosphoserine. At Ser330 the chain carries Phosphoserine; by ATM. The interval 350-369 (PMAYVETKCSPPVPSPLASE) is disordered. Residues Ser359 and Ser364 each carry the phosphoserine modification. Residues 409-789 (RGLINKGNWC…TAYLLYYRRV (381 aa)) enclose the USP domain. Cys418 serves as the catalytic Nucleophile. A Phosphoserine modification is found at Ser541. Positions 542–580 (PTHEKHSVSNGPRSDLIEDEELEDTGKGSEDEWEQVGPK) are disordered. Thr566 carries the post-translational modification Phosphothreonine. A Phosphoserine modification is found at Ser570. His743 acts as the Proton acceptor in catalysis.

Belongs to the peptidase C19 family. USP10 subfamily. As to quaternary structure, found in a deubiquitination complex with TANK, USP10 and ZC3H12A; this complex inhibits genotoxic stress- or interleukin-1-beta (IL1B)-mediated NF-kappa-B activation by promoting IKBKG or TRAF6 deubiquitination. Interacts with IKBKG; this interaction increases in response to DNA damage. Interacts with TANK; this interaction increases in response to DNA damage. Interacts with TRAF6; this interaction increases in response to DNA damage. Interacts with ZC3H12A; this interaction increases in response to DNA damage. Interacts with G3BP1 (via NTF2 domain) and G3BP2 (via NTF2 domain); inhibiting stress granule formation. In terms of processing, phosphorylated by ATM following DNA damage, leading to stabilization and translocation it to the nucleus. Ubiquitinated. Deubiquitinated by USP13.

Its subcellular location is the cytoplasm. It is found in the nucleus. The protein resides in the early endosome. It catalyses the reaction Thiol-dependent hydrolysis of ester, thioester, amide, peptide and isopeptide bonds formed by the C-terminal Gly of ubiquitin (a 76-residue protein attached to proteins as an intracellular targeting signal).. Specifically inhibited by spautin-1 (specific and potent autophagy inhibitor-1), a derivative of MBCQ that binds to USP10 and inhibits deubiquitinase activity. Regulated by PIK3C3/VPS34-containing complexes. In terms of biological role, hydrolase that can remove conjugated ubiquitin from target proteins such as p53/TP53, RPS2/us5, RPS3/us3, RPS10/eS10, BECN1, SNX3 and CFTR. Acts as an essential regulator of p53/TP53 stability: in unstressed cells, specifically deubiquitinates p53/TP53 in the cytoplasm, leading to counteract MDM2 action and stabilize p53/TP53. Following DNA damage, translocates to the nucleus and deubiquitinates p53/TP53, leading to regulate the p53/TP53-dependent DNA damage response. Component of a regulatory loop that controls autophagy and p53/TP53 levels: mediates deubiquitination of BECN1, a key regulator of autophagy, leading to stabilize the PIK3C3/VPS34-containing complexes. In turn, PIK3C3/VPS34-containing complexes regulate USP10 stability, suggesting the existence of a regulatory system by which PIK3C3/VPS34-containing complexes regulate p53/TP53 protein levels via USP10 and USP13. Does not deubiquitinate MDM2. Plays a key role in 40S ribosome subunit recycling when a ribosome has stalled during translation: acts both by inhibiting formation of stress granules, which store stalled translation pre-initiation complexes, and mediating deubiquitination of 40S ribosome subunits. Acts as a negative regulator of stress granules formation by lowering G3BP1 and G3BP2 valence, thereby preventing G3BP1 and G3BP2 ability to undergo liquid-liquid phase separation (LLPS) and assembly of stress granules. Promotes 40S ribosome subunit recycling following ribosome dissociation in response to ribosome stalling by mediating deubiquitination of 40S ribosomal proteins RPS2/us5, RPS3/us3 and RPS10/eS10, thereby preventing their degradation by the proteasome. Part of a ribosome quality control that takes place when ribosomes have stalled during translation initiation (iRQC): USP10 acts by removing monoubiquitination of RPS2/us5 and RPS3/us3, promoting 40S ribosomal subunit recycling. Deubiquitinates CFTR in early endosomes, enhancing its endocytic recycling. Involved in a TANK-dependent negative feedback response to attenuate NF-kappa-B activation via deubiquitinating IKBKG or TRAF6 in response to interleukin-1-beta (IL1B) stimulation or upon DNA damage. Deubiquitinates TBX21 leading to its stabilization. Plays a negative role in the RLR signaling pathway upon RNA virus infection by blocking the RIGI-mediated MAVS activation. Mechanistically, removes the unanchored 'Lys-63'-linked polyubiquitin chains of MAVS to inhibit its aggregation, essential for its activation. The protein is Ubiquitin carboxyl-terminal hydrolase 10 (Usp10) of Mus musculus (Mouse).